Here is a 740-residue protein sequence, read N- to C-terminus: Ion-translocating oxidoreductase complex subunit C (740 aa).

2 4Fe-4S ferredoxin-type domains span residues 369–397 (GEPQEEQSCIRCSACADACPADLLPQQLY) and 407–436 (KATTHNIADCIECGACAWVCPSNIPLVQYF). [4Fe-4S] cluster is bound by residues Cys377, Cys380, Cys383, Cys387, Cys416, Cys419, Cys422, and Cys426. Residues 602–717 (KLEQQQANAE…PEEQVDPRKA (116 aa)) form a disordered region. Composition is skewed to low complexity over residues 605–615 (QQQANAEPEQQ) and 637–647 (QQQANAEPEQQ).

This sequence belongs to the 4Fe4S bacterial-type ferredoxin family. RnfC subfamily. In terms of assembly, the complex is composed of six subunits: RsxA, RsxB, RsxC, RsxD, RsxE and RsxG. [4Fe-4S] cluster is required as a cofactor.

The protein localises to the cell inner membrane. In terms of biological role, part of a membrane-bound complex that couples electron transfer with translocation of ions across the membrane. Required to maintain the reduced state of SoxR. This chain is Ion-translocating oxidoreductase complex subunit C, found in Escherichia coli (strain ATCC 8739 / DSM 1576 / NBRC 3972 / NCIMB 8545 / WDCM 00012 / Crooks).